The primary structure comprises 362 residues: Atypical chemokine receptor 3 (362 aa).

Residues 1-40 are Extracellular-facing; it reads MDLHLFDYSEPGNFSDISWPCNSSDCIVVDTVMCPNMPNK. 3 N-linked (GlcNAc...) asparagine glycosylation sites follow: asparagine 13, asparagine 22, and asparagine 39. The helical transmembrane segment at 41 to 61 threads the bilayer; it reads SVLLYTLSFIYIFIFVIGMIA. Residues 62 to 81 lie on the Cytoplasmic side of the membrane; that stretch reads NSVVVWVNIQAKTTGYDTHC. Residues 82–102 form a helical membrane-spanning segment; the sequence is YILNLAIADLWVVLTIPVWVV. The Extracellular portion of the chain corresponds to 103–118; sequence SLVQHNQWPMGELTCK. An intrachain disulfide couples cysteine 117 to cysteine 196. The helical transmembrane segment at 119-139 threads the bilayer; it reads VTHLIFSINLFGSIFFLTCMS. At 140–162 the chain is on the cytoplasmic side; that stretch reads VDRYLSITYFTNTPSSRKKMVRR. Residues 163-183 traverse the membrane as a helical segment; sequence VVCILVWLLAFCVSLPDTYYL. The Extracellular portion of the chain corresponds to 184–213; sequence KTVTSASNNETYCRSFYPEHSIKEWLIGME. Residues 214–234 form a helical membrane-spanning segment; the sequence is LVSVVLGFAVPFSIIAVFYFL. Over 235-252 the chain is Cytoplasmic; that stretch reads LARAISASSDQEKHSSRK. A helical transmembrane segment spans residues 253–273; that stretch reads IIFSYVVVFLVCWLPYHVAVL. The Extracellular portion of the chain corresponds to 274 to 296; it reads LDIFSILHYIPFTCRLEHALFTA. The helical transmembrane segment at 297–319 threads the bilayer; the sequence is LHVTQCLSLVHCCVNPVLYSFIN. At 320–362 the chain is on the cytoplasmic side; sequence RNYRYELMKAFIFKYSAKTGLTKLIDASRVSETEYSALEQSTK. Positions 324–362 are C-terminal cytoplasmic tail; it reads YELMKAFIFKYSAKTGLTKLIDASRVSETEYSALEQSTK. Residues serine 347, serine 350, and serine 355 each carry the phosphoserine modification.

The protein belongs to the G-protein coupled receptor 1 family. Atypical chemokine receptor subfamily. As to quaternary structure, homodimer. Can form heterodimers with CXCR4; heterodimerization may regulate CXCR4 signaling activity. Interacts with ARRB1 and ARRB2. Post-translationally, the Ser/Thr residues in the C-terminal cytoplasmic tail may be phosphorylated. In terms of processing, ubiquitinated at the Lys residues in its C-terminal cytoplasmic tail and is essential for correct trafficking from and to the cell membrane. Deubiquitinated by CXCL12-stimulation in a reversible manner. In terms of tissue distribution, expressed in monocytes, basophils, B-cells, umbilical vein endothelial cells (HUVEC) and B-lymphoblastoid cells. Lower expression detected in CD4+ T-lymphocytes and natural killer cells. In the brain, detected in endothelial cells and capillaries, and in mature neurons of the frontal cortex and hippocampus. Expressed in tubular formation in the kidney. Highly expressed in astroglial tumor endothelial, microglial and glioma cells. Expressed at low levels in normal CD34+ progenitor cells, but at very high levels in several myeloid malignant cell lines. Expressed in breast carcinomas but not in normal breast tissue (at protein level).

The protein resides in the cell membrane. Its subcellular location is the early endosome. It is found in the recycling endosome. Functionally, atypical chemokine receptor that controls chemokine levels and localization via high-affinity chemokine binding that is uncoupled from classic ligand-driven signal transduction cascades, resulting instead in chemokine sequestration, degradation, or transcytosis. Also known as interceptor (internalizing receptor) or chemokine-scavenging receptor or chemokine decoy receptor. Acts as a receptor for chemokines CXCL11 and CXCL12/SDF1. Chemokine binding does not activate G-protein-mediated signal transduction but instead induces beta-arrestin recruitment, leading to ligand internalization and activation of MAPK signaling pathway. Required for regulation of CXCR4 protein levels in migrating interneurons, thereby adapting their chemokine responsiveness. In glioma cells, transduces signals via MEK/ERK pathway, mediating resistance to apoptosis. Promotes cell growth and survival. Not involved in cell migration, adhesion or proliferation of normal hematopoietic progenitors but activated by CXCL11 in malignant hemapoietic cells, leading to phosphorylation of ERK1/2 (MAPK3/MAPK1) and enhanced cell adhesion and migration. Plays a regulatory role in CXCR4-mediated activation of cell surface integrins by CXCL12. Required for heart valve development. Regulates axon guidance in the oculomotor system through the regulation of CXCL12 levels. Its function is as follows. (Microbial infection) Acts as a coreceptor with CXCR4 for a restricted number of HIV isolates. In Homo sapiens (Human), this protein is Atypical chemokine receptor 3.